A 335-amino-acid polypeptide reads, in one-letter code: Glutaredoxin-3 (335 aa).

A2 is modified (N-acetylalanine). In terms of domain architecture, Thioredoxin spans 2 to 117 (AAGAAEAAVA…LTKKVQRHAS (116 aa)). S117 and S120 each carry phosphoserine. 2 consecutive Glutaredoxin domains span residues 144-236 (APCM…PKLE) and 237-335 (ERLK…RGEN). [2Fe-2S] cluster is bound by residues C159 and C261.

In terms of assembly, homodimer; the homodimer is independent of 2Fe-2S clusters. Heterotrimer; forms a heterotrimeric complex composed by two BOLA2 molecules and one GLRX3 molecule; linked by [2Fe-2S] clusters. Interacts (via N-terminus) with PRKCQ/PKC-theta. Interacts (via C-terminus) with CSRP3. Interacts with CSRP2. As to expression, expressed in heart, spleen, testis and, to a lower extent, in thymus and peripheral blood leukocytes. Weakly expressed in lung, placenta, colon and small intestine.

It localises to the cytoplasm. Its subcellular location is the cytosol. The protein resides in the cell cortex. The protein localises to the myofibril. It is found in the sarcomere. It localises to the z line. Functionally, together with BOLA2, acts as a cytosolic iron-sulfur (Fe-S) cluster assembly factor that facilitates [2Fe-2S] cluster insertion into a subset of cytosolic proteins. Acts as a critical negative regulator of cardiac hypertrophy and a positive inotropic regulator. Required for hemoglobin maturation. Does not possess any thyoredoxin activity since it lacks the conserved motif that is essential for catalytic activity. The protein is Glutaredoxin-3 (GLRX3) of Homo sapiens (Human).